Consider the following 1441-residue polypeptide: Envelopment polyprotein (1441 aa).

The first 13 residues, 1 to 13 (MIRMLVLIVVTAA), serve as a signal peptide directing secretion. Residues 14–200 (SPVYQRCFQD…GSIANSICQN (187 aa)) are Lumenal-facing. Asn-57 is a glycosylation site (N-linked (GlcNAc...) asparagine; by host). A helical membrane pass occupies residues 201–221 (IEIIILVTLTLLIFILLSILS). Over 222–305 (KTYICYLLMP…RAARVMCKSK (84 aa)) the chain is Cytoplasmic. The chain crosses the membrane as a helical span at residues 306–326 (GPASILSIITAVLVLTFVTPI). The Lumenal segment spans residues 327 to 365 (NSMVLGESKETFELEELPDDMLEMALRINSYYFTCILNY). Residues 366–386 (AVSWGLIIAGLLVGLIFKKYQ) traverse the membrane as a helical segment. The Cytoplasmic portion of the chain corresponds to 387–452 (HRFLNIYAMY…LVQYKAKWMM (66 aa)). The chain crosses the membrane as a helical span at residues 453–473 (NFLIIYIFLILIKDSAIVGQA). The Lumenal segment spans residues 474 to 1395 (TGTDFTTCLE…EPFKNLFGSY (922 aa)). N-linked (GlcNAc...) asparagine; by host glycans are attached at residues Asn-490 and Asn-1177. The helical transmembrane segment at 1396-1416 (IGIFYTFIISIIALLVIIYVL) threads the bilayer. The Cytoplasmic segment spans residues 1417–1441 (LPICFKLRDTLRKHDDAYKREMKIR).

It belongs to the orthobunyavirus envelope glycoprotein family. As to quaternary structure, glycoprotein C and Glycoprotein N interact with each other. Post-translationally, specific enzymatic cleavages in vivo yield mature proteins including nonstructural protein NSm, glycoprotein C, and glycoprotein N.

It is found in the virion membrane. The protein resides in the host Golgi apparatus membrane. It localises to the host endoplasmic reticulum membrane. Glycoprotein C and Glycoprotein N interact with each other and are present at the surface of the virion. They are able to attach the virion to a cell receptor and to promote fusion of membranes after endocytosis of the virion. The protein is Envelopment polyprotein (GP) of Bunyavirus La Crosse.